Here is a 138-residue protein sequence, read N- to C-terminus: Ribulose bisphosphate carboxylase small subunit (138 aa).

The protein belongs to the RuBisCO small chain family. In terms of assembly, heterohexadecamer of 8 large and 8 small subunits.

Its subcellular location is the plastid. The protein localises to the chloroplast. Functionally, ruBisCO catalyzes two reactions: the carboxylation of D-ribulose 1,5-bisphosphate, the primary event in carbon dioxide fixation, as well as the oxidative fragmentation of the pentose substrate in the photorespiration process. Both reactions occur simultaneously and in competition at the same active site. Although the small subunit is not catalytic it is essential for maximal activity. The polypeptide is Ribulose bisphosphate carboxylase small subunit (Pyropia haitanensis (Red seaweed)).